The primary structure comprises 91 residues: UPF0250 protein HCH_05838 (91 aa).

It belongs to the UPF0250 family.

The protein is UPF0250 protein HCH_05838 of Hahella chejuensis (strain KCTC 2396).